The chain runs to 86 residues: uncharacterized protein (86 aa).

An N-terminal signal peptide occupies residues 1–31; it reads MKQKLLLSGLAVSTVGITSYLLKDPSNRQKA. The disordered stretch occupies residues 46-69; sequence PDMETFPVDKAGHPDPQDIEDNKM. The segment covering 55–69 has biased composition (basic and acidic residues); that stretch reads KAGHPDPQDIEDNKM.

This is an uncharacterized protein from Bacillus subtilis (strain 168).